A 41-amino-acid chain; its full sequence is MPNSYFPSSVTSLHFIDCSVLELNQIHSNITILSLPNEFNH.

This is an uncharacterized protein from Dictyostelium discoideum (Social amoeba).